A 271-amino-acid chain; its full sequence is Ribosomal RNA small subunit methyltransferase A (271 aa).

S-adenosyl-L-methionine contacts are provided by H11, L13, G38, E58, D86, and N101.

It belongs to the class I-like SAM-binding methyltransferase superfamily. rRNA adenine N(6)-methyltransferase family. RsmA subfamily.

The protein localises to the cytoplasm. It catalyses the reaction adenosine(1518)/adenosine(1519) in 16S rRNA + 4 S-adenosyl-L-methionine = N(6)-dimethyladenosine(1518)/N(6)-dimethyladenosine(1519) in 16S rRNA + 4 S-adenosyl-L-homocysteine + 4 H(+). Its function is as follows. Specifically dimethylates two adjacent adenosines (A1518 and A1519) in the loop of a conserved hairpin near the 3'-end of 16S rRNA in the 30S particle. May play a critical role in biogenesis of 30S subunits. The polypeptide is Ribosomal RNA small subunit methyltransferase A (Helicobacter pylori (strain G27)).